Here is a 1273-residue protein sequence, read N- to C-terminus: Lysine-specific histone demethylase 2 (1273 aa).

A compositionally biased stretch (polar residues) spans 199 to 230 (ENFFDANSPSSQQFPSTYPSRSQNPLSSSGDG). Positions 199–237 (ENFFDANSPSSQQFPSTYPSRSQNPLSSSGDGSTAIHAG) are disordered. Residues 247–307 (FSNYPYPLDA…LSKSVDNAVL (61 aa)) adopt a coiled-coil conformation. The SWIRM domain occupies 394–490 (AAEAARKCNL…YGCLSFDSSF (97 aa)). Residues 509 to 551 (IAVV…ILEA), Thr517, Glu550, Arg558, and 572 to 573 (TQ) contribute to the FAD site. The segment at 542 to 1198 (LPPKVIILEA…GKILRYQRLT (657 aa)) is demethylase activity. The interval 571-596 (ATQINHHTSNSNSISSNSTSLNPKDV) is disordered. Residues 574 to 590 (INHHTSNSNSISSNSTS) are compositionally biased toward low complexity. Residues 681–767 (SVRISWISQF…NTVDTDFSKD (87 aa)) are a coiled coil. The segment at residues 1115–1195 (SKPNANPFLL…AYAGKILRYQ (81 aa)) is a DNA-binding region (HMG box). Residues Asp1147 and 1156–1157 (ET) each bind FAD. The disordered stretch occupies residues 1215-1273 (KCQDEPIPDDEARLFMQAQREEEQRKQTQDDNISKSREASDEEYHDDGSSDSGYNGTRY). Basic and acidic residues predominate over residues 1233 to 1253 (QREEEQRKQTQDDNISKSREA). Residues 1264–1273 (SDSGYNGTRY) show a composition bias toward polar residues.

It belongs to the flavin monoamine oxidase family. As to quaternary structure, component of the SWM histone demethylase complex composed of at least lsd1, lsd2, phf1 and phf2. Interacts directly with lsd1. It depends on FAD as a cofactor.

It localises to the nucleus. Functionally, catalytic component of the SWM histone demethylase complex that specifically demethylates H3K9me2, a specific tag for epigenetic transcriptional activation, thereby acting as a corepressor. Acts by oxidizing the substrate by FAD to generate the corresponding imine that is subsequently hydrolyzed. Has a role in regulating heterochromatin propagation and euchromatic transcription. Also has a gene activating role. The protein is Lysine-specific histone demethylase 2 (lsd2) of Schizosaccharomyces pombe (strain 972 / ATCC 24843) (Fission yeast).